The sequence spans 560 residues: 2-isopropylmalate synthase (560 aa).

A Pyruvate carboxyltransferase domain is found at Pro-30–Glu-303. Mg(2+) contacts are provided by Asp-39, His-242, His-244, and Asn-278. The regulatory domain stretch occupies residues Gln-437–Ala-560.

It belongs to the alpha-IPM synthase/homocitrate synthase family. LeuA type 2 subfamily. In terms of assembly, homodimer. Mg(2+) is required as a cofactor.

It localises to the cytoplasm. The catalysed reaction is 3-methyl-2-oxobutanoate + acetyl-CoA + H2O = (2S)-2-isopropylmalate + CoA + H(+). The protein operates within amino-acid biosynthesis; L-leucine biosynthesis; L-leucine from 3-methyl-2-oxobutanoate: step 1/4. Functionally, catalyzes the condensation of the acetyl group of acetyl-CoA with 3-methyl-2-oxobutanoate (2-ketoisovalerate) to form 3-carboxy-3-hydroxy-4-methylpentanoate (2-isopropylmalate). This is 2-isopropylmalate synthase from Rhizobium johnstonii (strain DSM 114642 / LMG 32736 / 3841) (Rhizobium leguminosarum bv. viciae).